An 885-amino-acid polypeptide reads, in one-letter code: GPI ethanolamine phosphate transferase 2 (885 aa).

3 N-linked (GlcNAc...) asparagine glycosylation sites follow: Asn-82, Asn-155, and Asn-194. A helical transmembrane segment spans residues 413 to 433 (DIYAGALILVITALAVIVVFN). N-linked (GlcNAc...) asparagine glycosylation is present at Asn-443. Transmembrane regions (helical) follow at residues 447-467 (VMFY…SSLI), 473-493 (IWYF…FDTF), and 495-514 (SLQN…FMRS). Asn-516 is a glycosylation site (N-linked (GlcNAc...) asparagine). Helical transmembrane passes span 539–559 (LMWG…YIQG), 581–601 (GLIS…FKLL), 648–668 (IQLS…RVII), 697–717 (ENIP…KLIY), 726–746 (YILT…FCMG), 768–788 (VFLV…FWSL), 820–840 (ILLV…VNLV), and 865–885 (SWIL…VLLF).

It belongs to the PIGG/PIGN/PIGO family. PIGG subfamily.

Its subcellular location is the endoplasmic reticulum membrane. The protein operates within glycolipid biosynthesis; glycosylphosphatidylinositol-anchor biosynthesis. Its function is as follows. Ethanolamine phosphate transferase involved in glycosylphosphatidylinositol-anchor biosynthesis. Transfers ethanolamine phosphate to the GPI second mannose. The chain is GPI ethanolamine phosphate transferase 2 (GPI7) from Candida albicans (strain SC5314 / ATCC MYA-2876) (Yeast).